Consider the following 372-residue polypeptide: Erythronate-4-phosphate dehydrogenase (372 aa).

Positions 45 and 66 each coordinate substrate. Residue Asp-146 coordinates NAD(+). The active site involves Arg-209. An NAD(+)-binding site is contributed by Asp-233. The active site involves Glu-238. Catalysis depends on His-255, which acts as the Proton donor. Residue Gly-258 participates in NAD(+) binding. Tyr-259 serves as a coordination point for substrate.

The protein belongs to the D-isomer specific 2-hydroxyacid dehydrogenase family. PdxB subfamily. Homodimer.

Its subcellular location is the cytoplasm. The enzyme catalyses 4-phospho-D-erythronate + NAD(+) = (R)-3-hydroxy-2-oxo-4-phosphooxybutanoate + NADH + H(+). It participates in cofactor biosynthesis; pyridoxine 5'-phosphate biosynthesis; pyridoxine 5'-phosphate from D-erythrose 4-phosphate: step 2/5. Functionally, catalyzes the oxidation of erythronate-4-phosphate to 3-hydroxy-2-oxo-4-phosphonooxybutanoate. This is Erythronate-4-phosphate dehydrogenase from Blochmanniella floridana.